Reading from the N-terminus, the 202-residue chain is NADH-quinone oxidoreductase subunit C (202 aa).

The protein belongs to the complex I 30 kDa subunit family. In terms of assembly, NDH-1 is composed of 14 different subunits. Subunits NuoB, C, D, E, F, and G constitute the peripheral sector of the complex.

Its subcellular location is the cell inner membrane. It catalyses the reaction a quinone + NADH + 5 H(+)(in) = a quinol + NAD(+) + 4 H(+)(out). Functionally, NDH-1 shuttles electrons from NADH, via FMN and iron-sulfur (Fe-S) centers, to quinones in the respiratory chain. The immediate electron acceptor for the enzyme in this species is believed to be ubiquinone. Couples the redox reaction to proton translocation (for every two electrons transferred, four hydrogen ions are translocated across the cytoplasmic membrane), and thus conserves the redox energy in a proton gradient. In Hyphomonas neptunium (strain ATCC 15444), this protein is NADH-quinone oxidoreductase subunit C.